The primary structure comprises 226 residues: Eukaryotic translation initiation factor 3 subunit K (226 aa).

One can recognise a PCI domain in the interval 44-202 (YSLEVNLCLL…IVLPQNEFNH (159 aa)).

This sequence belongs to the eIF-3 subunit K family. Component of the eukaryotic translation initiation factor 3 (eIF-3) complex.

The protein localises to the cytoplasm. In terms of biological role, component of the eukaryotic translation initiation factor 3 (eIF-3) complex, which is involved in protein synthesis of a specialized repertoire of mRNAs and, together with other initiation factors, stimulates binding of mRNA and methionyl-tRNAi to the 40S ribosome. The eIF-3 complex specifically targets and initiates translation of a subset of mRNAs involved in cell proliferation. The sequence is that of Eukaryotic translation initiation factor 3 subunit K (TIF3K1) from Arabidopsis thaliana (Mouse-ear cress).